The primary structure comprises 246 residues: Pyruvate formate-lyase 1-activating enzyme (246 aa).

The Radical SAM core domain occupies 16–239; that stretch reads VDGPGIRFIT…MERVKGILEQ (224 aa). [4Fe-4S] cluster contacts are provided by Cys30, Cys34, and Cys37. Residues 36–38, Gly79, 130–132, and His203 each bind S-adenosyl-L-methionine; these read YCH and DLK.

It belongs to the organic radical-activating enzymes family. Requires [4Fe-4S] cluster as cofactor.

It is found in the cytoplasm. The enzyme catalyses glycyl-[formate C-acetyltransferase] + reduced [flavodoxin] + S-adenosyl-L-methionine = glycin-2-yl radical-[formate C-acetyltransferase] + semiquinone [flavodoxin] + 5'-deoxyadenosine + L-methionine + H(+). Activation of pyruvate formate-lyase 1 under anaerobic conditions by generation of an organic free radical, using S-adenosylmethionine and reduced flavodoxin as cosubstrates to produce 5'-deoxy-adenosine. This is Pyruvate formate-lyase 1-activating enzyme (pflA) from Escherichia coli O157:H7.